The following is a 252-amino-acid chain: 3-dehydroquinate dehydratase (252 aa).

Residues Ser-21, 46 to 48 (EWR), and Arg-82 contribute to the 3-dehydroquinate site. His-143 serves as the catalytic Proton donor/acceptor. The Schiff-base intermediate with substrate role is filled by Lys-170. 3-dehydroquinate contacts are provided by Arg-213, Ser-232, and Gln-236.

It belongs to the type-I 3-dehydroquinase family. In terms of assembly, homodimer.

The catalysed reaction is 3-dehydroquinate = 3-dehydroshikimate + H2O. The protein operates within metabolic intermediate biosynthesis; chorismate biosynthesis; chorismate from D-erythrose 4-phosphate and phosphoenolpyruvate: step 3/7. In terms of biological role, involved in the third step of the chorismate pathway, which leads to the biosynthesis of aromatic amino acids. Catalyzes the cis-dehydration of 3-dehydroquinate (DHQ) and introduces the first double bond of the aromatic ring to yield 3-dehydroshikimate. In Escherichia coli O17:K52:H18 (strain UMN026 / ExPEC), this protein is 3-dehydroquinate dehydratase.